We begin with the raw amino-acid sequence, 156 residues long: Large ribosomal subunit protein uL15 (156 aa).

The disordered stretch occupies residues 26 to 46 (GIGCGKGKTSGRGHKGQKARS). Basic residues predominate over residues 34-43 (TSGRGHKGQK).

It belongs to the universal ribosomal protein uL15 family. As to quaternary structure, part of the 50S ribosomal subunit.

Its function is as follows. Binds to the 23S rRNA. The protein is Large ribosomal subunit protein uL15 of Ehrlichia canis (strain Jake).